The sequence spans 638 residues: Zinc finger and BTB domain-containing protein 22 (638 aa).

The BTB domain maps to 57–121 (CDVSIRVQGR…AYTGRLSMAA (65 aa)). 4 disordered regions span residues 171–223 (CASV…STSQ), 229–248 (SAAG…APVV), 335–354 (DDED…GEPE), and 367–451 (EPAD…HGAV). The segment covering 189–210 (SVRSHTSSRASENQSPSSSNYF) has biased composition (polar residues). At Ser203 the chain carries Phosphoserine. The C2H2-type 1; atypical zinc finger occupies 483 to 504 (FLCHCGKAFSHKSMRDRHVNMH). C2H2-type zinc fingers lie at residues 510–532 (FDCP…MKTH) and 538–559 (YECS…HRGH). A disordered region spans residues 564-638 (HRMGVGGVGS…DFSGGGGAAH (75 aa)).

This sequence belongs to the krueppel C2H2-type zinc-finger protein family.

The protein localises to the nucleus. Functionally, may be involved in transcriptional regulation. This is Zinc finger and BTB domain-containing protein 22 (Zbtb22) from Mus musculus (Mouse).